A 318-amino-acid polypeptide reads, in one-letter code: MRQFLDFEKSVAELENKIDELRKMSEPDGINLAEEIARLTDKSEKQLRAAYAKLSPWQKVQVARHAQRPHAADYIGTLIQDFTPLAGDRLFGEDKAVIGGIGRFQNQPVVVIGTERGSELESRLAHNFGMARPEGYRKAQRLMELAGRFGMPILTFIDTSGAWPGIDAEARGQAEAIARSIDTCLSAPVPVIATVIGEGGSGGAIALGAGDRVMMLEHAIYSVISPEACASILWRDPKQATSAAEALKLTAQDLLQLKLIDRIIPEPVGGAQRDPESTIRSVGDSIAAELPDLLSLSAPMLVAQRREKFLAMGRDSLS.

A CoA carboxyltransferase C-terminal domain is found at 39 to 292 (LTDKSEKQLR…GDSIAAELPD (254 aa)).

It belongs to the AccA family. As to quaternary structure, acetyl-CoA carboxylase is a heterohexamer composed of biotin carboxyl carrier protein (AccB), biotin carboxylase (AccC) and two subunits each of ACCase subunit alpha (AccA) and ACCase subunit beta (AccD).

It localises to the cytoplasm. It catalyses the reaction N(6)-carboxybiotinyl-L-lysyl-[protein] + acetyl-CoA = N(6)-biotinyl-L-lysyl-[protein] + malonyl-CoA. The protein operates within lipid metabolism; malonyl-CoA biosynthesis; malonyl-CoA from acetyl-CoA: step 1/1. Its function is as follows. Component of the acetyl coenzyme A carboxylase (ACC) complex. First, biotin carboxylase catalyzes the carboxylation of biotin on its carrier protein (BCCP) and then the CO(2) group is transferred by the carboxyltransferase to acetyl-CoA to form malonyl-CoA. This is Acetyl-coenzyme A carboxylase carboxyl transferase subunit alpha from Gluconacetobacter diazotrophicus (strain ATCC 49037 / DSM 5601 / CCUG 37298 / CIP 103539 / LMG 7603 / PAl5).